The following is a 222-amino-acid chain: Sugar fermentation stimulation protein homolog (222 aa).

This sequence belongs to the SfsA family.

This Thermotoga neapolitana (strain ATCC 49049 / DSM 4359 / NBRC 107923 / NS-E) protein is Sugar fermentation stimulation protein homolog.